The primary structure comprises 91 residues: Large ribosomal subunit protein eL43 (91 aa).

A C4-type zinc finger spans residues 39–60; that stretch reads CSFCGKEAMKRKATGIWNCAKC.

This sequence belongs to the eukaryotic ribosomal protein eL43 family.

This is Large ribosomal subunit protein eL43 from Caenorhabditis elegans.